Consider the following 142-residue polypeptide: Hemoglobin subunit alpha-A (142 aa).

The region spanning 2 to 142 (VLSAADKGNV…VATVLTAKYR (141 aa)) is the Globin domain. O2 is bound at residue H59. H88 is a binding site for heme b.

This sequence belongs to the globin family. Heterotetramer of two alpha chains and two beta chains. As to expression, red blood cells.

In terms of biological role, involved in oxygen transport from the lung to the various peripheral tissues. This Anseranas semipalmata (Magpie goose) protein is Hemoglobin subunit alpha-A (HBAA).